A 358-amino-acid chain; its full sequence is Acetylxylan esterase / glucomannan deacetylase (358 aa).

An N-terminal signal peptide occupies residues 1–18; it reads MKLLFPILLLTGSYFLSA. Cys19 carries the N-palmitoyl cysteine lipid modification. Residue Cys19 is the site of S-diacylglycerol cysteine attachment. The Nucleophile role is filled by Ser160. Catalysis depends on charge relay system residues Asp333 and His335.

This sequence belongs to the carbohydrate esterase 2 (CE2) family.

The protein resides in the cell membrane. The enzyme catalyses Deacetylation of xylans and xylo-oligosaccharides.. It participates in glycan degradation; xylan degradation. Involved in the degradation of plant cell wall polysaccharides. Catalyzes the deacetylation of acetylated birchwood xylan and glucomannan, with equal efficiency, and of the synthetic substrate 4-nitrophenyl acetate (4-NPAc). Does not bind cellulose, cellohexaose and beta-glucan. This chain is Acetylxylan esterase / glucomannan deacetylase, found in Cellvibrio japonicus (strain Ueda107) (Pseudomonas fluorescens subsp. cellulosa).